The primary structure comprises 150 residues: D-aminoacyl-tRNA deacylase (150 aa).

A Gly-cisPro motif, important for rejection of L-amino acids motif is present at residues 140 to 141 (GP).

Belongs to the DTD family. In terms of assembly, homodimer.

The protein localises to the cytoplasm. The enzyme catalyses glycyl-tRNA(Ala) + H2O = tRNA(Ala) + glycine + H(+). It carries out the reaction a D-aminoacyl-tRNA + H2O = a tRNA + a D-alpha-amino acid + H(+). It catalyses the reaction D-tyrosyl-tRNA(Tyr) + H2O = D-tyrosine + tRNA(Tyr). Its function is as follows. An aminoacyl-tRNA editing enzyme that deacylates mischarged D-aminoacyl-tRNAs. Hydrolyzes D-tyrosyl-tRNA(Tyr) into D-tyrosine and free tRNA(Tyr). May also deacylate mischarged D-leucyl-tRNA(Leu). Also deacylates mischarged glycyl-tRNA(Ala), protecting cells against glycine mischarging by AlaRS. Acts via tRNA-based rather than protein-based catalysis; rejects L-amino acids rather than detecting D-amino acids in the active site. By recycling D-aminoacyl-tRNA to D-amino acids and free tRNA molecules, this enzyme counteracts the toxicity associated with the formation of D-aminoacyl-tRNA entities in vivo and helps enforce protein L-homochirality. This chain is D-aminoacyl-tRNA deacylase, found in Saccharomyces cerevisiae (strain ATCC 204508 / S288c) (Baker's yeast).